The following is a 113-amino-acid chain: Na(+)/H(+) antiporter subunit C1 (113 aa).

3 helical membrane passes run 1-21, 28-48, and 72-92; these read MEII…YLVL, IVMG…TMGG, and LILT…VLAF.

This sequence belongs to the CPA3 antiporters (TC 2.A.63) subunit C family. In terms of assembly, may form a heterooligomeric complex that consists of seven subunits: mnhA1, mnhB1, mnhC1, mnhD1, mnhE1, mnhF1 and mnhG1.

Its subcellular location is the cell membrane. Mnh complex is a Na(+)/H(+) antiporter involved in Na(+) excretion. The polypeptide is Na(+)/H(+) antiporter subunit C1 (mnhC1) (Staphylococcus haemolyticus (strain JCSC1435)).